The sequence spans 337 residues: Phosphate acyltransferase (337 aa).

The protein belongs to the PlsX family. Homodimer. Probably interacts with PlsY.

Its subcellular location is the cytoplasm. The catalysed reaction is a fatty acyl-[ACP] + phosphate = an acyl phosphate + holo-[ACP]. The protein operates within lipid metabolism; phospholipid metabolism. Catalyzes the reversible formation of acyl-phosphate (acyl-PO(4)) from acyl-[acyl-carrier-protein] (acyl-ACP). This enzyme utilizes acyl-ACP as fatty acyl donor, but not acyl-CoA. The chain is Phosphate acyltransferase from Aquifex aeolicus (strain VF5).